We begin with the raw amino-acid sequence, 173 residues long: Bifunctional protein PyrR (173 aa).

Residues 93–105 (VILVDDVLYTGRT) carry the PRPP-binding motif.

It belongs to the purine/pyrimidine phosphoribosyltransferase family. PyrR subfamily. Homodimer and homohexamer; in equilibrium.

The enzyme catalyses UMP + diphosphate = 5-phospho-alpha-D-ribose 1-diphosphate + uracil. Its function is as follows. Regulates transcriptional attenuation of the pyrimidine nucleotide (pyr) operon by binding in a uridine-dependent manner to specific sites on pyr mRNA. This disrupts an antiterminator hairpin in the RNA and favors formation of a downstream transcription terminator, leading to a reduced expression of downstream genes. In terms of biological role, also displays a weak uracil phosphoribosyltransferase activity which is not physiologically significant. This is Bifunctional protein PyrR from Streptococcus suis (strain 05ZYH33).